Reading from the N-terminus, the 111-residue chain is Rho GDP-dissociation inhibitor 1 (111 aa).

Glycyl lysine isopeptide (Lys-Gly) (interchain with G-Cter in SUMO1); alternate cross-links involve residues lysine 57 and lysine 60. Residues lysine 57 and lysine 60 each participate in a glycyl lysine isopeptide (Lys-Gly) (interchain with G-Cter in SUMO2); alternate cross-link. At lysine 60 the chain carries N6-acetyllysine; alternate. At lysine 60 the chain carries N6-succinyllysine; alternate.

The protein belongs to the Rho GDI family. Monomer. Interacts with FER. Interacts with PLXNB3. Forms a heterodimer with RAC1. Interacts with RHOA, the affinity is increased by three orders of magnitude when RHOA is prenylated. Interacts with PSMD10; the interaction increases ARHGDIA association with RHOA, leading to ARHGDIA-mediated inactivation of RHOA and ROCK and prolonged AKT activation. Interacts with KANK2; the interaction is direct and may regulate the interaction of ARHGDIA with RHOA, RAC1 and CDC42. Interacts with RHOC. Interacts with CDC42. Interacts with NGFR (via death domain); NGFR binding decreases the affinity for RHOA. Post-translationally, the N-terminus is blocked.

Its subcellular location is the cytoplasm. Controls Rho proteins homeostasis. Regulates the GDP/GTP exchange reaction of the Rho proteins by inhibiting the dissociation of GDP from them, and the subsequent binding of GTP to them. Retains Rho proteins such as CDC42, RAC1 and RHOA in an inactive cytosolic pool, regulating their stability and protecting them from degradation. Actively involved in the recycling and distribution of activated Rho GTPases in the cell, mediates extraction from membranes of both inactive and activated molecules due its exceptionally high affinity for prenylated forms. Through the modulation of Rho proteins, may play a role in cell motility regulation. In glioma cells, inhibits cell migration and invasion by mediating the signals of SEMA5A and PLXNB3 that lead to inactivation of RAC1. The chain is Rho GDP-dissociation inhibitor 1 (ARHGDIA) from Cavia porcellus (Guinea pig).